The following is a 299-amino-acid chain: Oxygen-dependent coproporphyrinogen-III oxidase (299 aa).

Position 92 (serine 92) interacts with substrate. Mn(2+) is bound by residues histidine 96 and histidine 106. Residue histidine 106 is the Proton donor of the active site. Substrate is bound at residue 108–110 (NVR). The Mn(2+) site is built by histidine 145 and histidine 175. The tract at residues 240–275 (YVEFNLVWDRGTLFGLQTGGRTESILMSMPPLVRWE) is important for dimerization. Residue 258–260 (GGR) coordinates substrate.

This sequence belongs to the aerobic coproporphyrinogen-III oxidase family. As to quaternary structure, homodimer. Mn(2+) is required as a cofactor.

It is found in the cytoplasm. The catalysed reaction is coproporphyrinogen III + O2 + 2 H(+) = protoporphyrinogen IX + 2 CO2 + 2 H2O. The protein operates within porphyrin-containing compound metabolism; protoporphyrin-IX biosynthesis; protoporphyrinogen-IX from coproporphyrinogen-III (O2 route): step 1/1. Involved in the heme biosynthesis. Catalyzes the aerobic oxidative decarboxylation of propionate groups of rings A and B of coproporphyrinogen-III to yield the vinyl groups in protoporphyrinogen-IX. This chain is Oxygen-dependent coproporphyrinogen-III oxidase, found in Escherichia coli (strain K12 / MC4100 / BW2952).